Here is a 179-residue protein sequence, read N- to C-terminus: Large ribosomal subunit protein uL5 (179 aa).

This sequence belongs to the universal ribosomal protein uL5 family. Part of the 50S ribosomal subunit; part of the 5S rRNA/L5/L18/L25 subcomplex. Contacts the 5S rRNA and the P site tRNA. Forms a bridge to the 30S subunit in the 70S ribosome.

In terms of biological role, this is one of the proteins that bind and probably mediate the attachment of the 5S RNA into the large ribosomal subunit, where it forms part of the central protuberance. In the 70S ribosome it contacts protein S13 of the 30S subunit (bridge B1b), connecting the 2 subunits; this bridge is implicated in subunit movement. Contacts the P site tRNA; the 5S rRNA and some of its associated proteins might help stabilize positioning of ribosome-bound tRNAs. In Pseudomonas putida (strain ATCC 700007 / DSM 6899 / JCM 31910 / BCRC 17059 / LMG 24140 / F1), this protein is Large ribosomal subunit protein uL5.